Reading from the N-terminus, the 406-residue chain is Nodal homolog (406 aa).

The signal sequence occupies residues 1–18; that stretch reads MAFLTAVLYLGFACISQG. Residues 19-281 constitute a propeptide that is removed on maturation; the sequence is LPTWPDRVES…RVPGIRRHRR (263 aa). Residues Asn-71, Asn-136, and Asn-172 are each glycosylated (N-linked (GlcNAc...) asparagine). The disordered stretch occupies residues 195 to 222; that stretch reads KERAERGSGMSNAEFIDAPGPSQQYNPH. 3 cysteine pairs are disulfide-bonded: Cys-306–Cys-372, Cys-335–Cys-403, and Cys-339–Cys-405. Residue Asn-344 is glycosylated (N-linked (GlcNAc...) asparagine).

This sequence belongs to the TGF-beta family. Homodimer; disulfide-linked. Interacts with, and is inhibited by cer1 and gdf10/bmp3b. In the first phase of expression, localized to the vegetal region of the blastula. During gastrulation (stage 10.5), this expression disappears and instead becomes localized to the dorsal marginal zone, with enrichment in the organizer. During the second phase of expression in neurulae and tailbud embryos, expression restarts firstly in two symmetric patches near the posterior end of the notochord, and then in a large asymmetrical domain in the left lateral plate mesoderm.

It is found in the secreted. Cooperation and regulatory loops of multiple nodals are essential for mesendoderm patterning in early embryos. Essential for mesoderm formation and axial patterning during embryonic development. Activates the activin-like signaling pathway to induce dorsal and ventral mesoderm in animal cap ectoderm. In addition, also dorsalizes ventral marginal zone (VMZ) tissues during gastrulation. Acts in a downstream signaling cascade via cripto and cer1 to mediate cardiogenesis in embryonic mesoderm. Directs the orientation of the left-right axis by driving the left-specific gene cascade in the left lateral plate mesoderm. The polypeptide is Nodal homolog (Xenopus laevis (African clawed frog)).